The sequence spans 494 residues: Cobyrinate a,c-diamide synthase (494 aa).

Positions 270–475 constitute a GATase cobBQ-type domain; sequence KIGVALDEAF…AHLHGVAYRE (206 aa). The Nucleophile role is filled by C352.

The protein belongs to the CobB/CbiA family. Mg(2+) is required as a cofactor.

It carries out the reaction cob(II)yrinate + 2 L-glutamine + 2 ATP + 2 H2O = cob(II)yrinate a,c diamide + 2 L-glutamate + 2 ADP + 2 phosphate + 2 H(+). It catalyses the reaction Ni-sirohydrochlorin + 2 L-glutamine + 2 ATP + 2 H2O = Ni-sirohydrochlorin a,c-diamide + 2 L-glutamate + 2 ADP + 2 phosphate + 2 H(+). It participates in cofactor biosynthesis; adenosylcobalamin biosynthesis; cob(II)yrinate a,c-diamide from sirohydrochlorin (anaerobic route): step 10/10. Catalyzes the ATP-dependent amidation of the two carboxylate groups at positions a and c of cobyrinate, using either L-glutamine or ammonia as the nitrogen source (Potential). Involved in the biosynthesis of the unique nickel-containing tetrapyrrole coenzyme F430, the prosthetic group of methyl-coenzyme M reductase (MCR), which plays a key role in methanogenesis and anaerobic methane oxidation. Catalyzes the ATP-dependent amidation of the two carboxylate groups at positions a and c of Ni-sirohydrochlorin, using L-glutamine or ammonia as the nitrogen source. Also able to use sirohydrochlorin as substrate, but only produces a monoamide species in a much slower reaction. Unable to use other metallosirohydrochlorins such as sirohaem and Co-sirohydrochlorin. In Methanosarcina barkeri (strain Fusaro / DSM 804), this protein is Cobyrinate a,c-diamide synthase.